The primary structure comprises 351 residues: UDP-N-acetylglucosamine--N-acetylmuramyl-(pentapeptide) pyrophosphoryl-undecaprenol N-acetylglucosamine transferase (351 aa).

Residues 12–14 (TGG), Asn-124, Arg-160, Ser-188, Ile-239, 258–263 (ALTVCE), and Gln-283 each bind UDP-N-acetyl-alpha-D-glucosamine.

This sequence belongs to the glycosyltransferase 28 family. MurG subfamily.

It is found in the cell inner membrane. It catalyses the reaction di-trans,octa-cis-undecaprenyl diphospho-N-acetyl-alpha-D-muramoyl-L-alanyl-D-glutamyl-meso-2,6-diaminopimeloyl-D-alanyl-D-alanine + UDP-N-acetyl-alpha-D-glucosamine = di-trans,octa-cis-undecaprenyl diphospho-[N-acetyl-alpha-D-glucosaminyl-(1-&gt;4)]-N-acetyl-alpha-D-muramoyl-L-alanyl-D-glutamyl-meso-2,6-diaminopimeloyl-D-alanyl-D-alanine + UDP + H(+). The protein operates within cell wall biogenesis; peptidoglycan biosynthesis. Its function is as follows. Cell wall formation. Catalyzes the transfer of a GlcNAc subunit on undecaprenyl-pyrophosphoryl-MurNAc-pentapeptide (lipid intermediate I) to form undecaprenyl-pyrophosphoryl-MurNAc-(pentapeptide)GlcNAc (lipid intermediate II). The protein is UDP-N-acetylglucosamine--N-acetylmuramyl-(pentapeptide) pyrophosphoryl-undecaprenol N-acetylglucosamine transferase of Actinobacillus pleuropneumoniae serotype 7 (strain AP76).